The chain runs to 248 residues: 5'-nucleotidase SurE (248 aa).

A divalent metal cation-binding residues include D8, D9, S39, and N91.

This sequence belongs to the SurE nucleotidase family. A divalent metal cation is required as a cofactor.

The protein localises to the cytoplasm. It carries out the reaction a ribonucleoside 5'-phosphate + H2O = a ribonucleoside + phosphate. Functionally, nucleotidase that shows phosphatase activity on nucleoside 5'-monophosphates. In Geobacter sp. (strain M21), this protein is 5'-nucleotidase SurE.